The sequence spans 257 residues: Exosome complex component Rrp4 (257 aa).

The S1 motif domain occupies 65–137 (GDNVLGKIVD…EVNQIDLTTK (73 aa)). One can recognise a KH domain in the interval 147 to 206 (RGGQLVTITPSKVPRLIGKGGSMINMIKTLTGTRIIVGQNGWVWVSGKNDELERLAIEAI).

It belongs to the RRP4 family. Component of the archaeal exosome complex. Forms a trimer of Rrp4 and/or Csl4 subunits. The trimer associates with a hexameric ring-like arrangement composed of 3 Rrp41-Rrp42 heterodimers.

The protein localises to the cytoplasm. In terms of biological role, non-catalytic component of the exosome, which is a complex involved in RNA degradation. Increases the RNA binding and the efficiency of RNA degradation. Confers strong poly(A) specificity to the exosome. The polypeptide is Exosome complex component Rrp4 (Thermococcus kodakarensis (strain ATCC BAA-918 / JCM 12380 / KOD1) (Pyrococcus kodakaraensis (strain KOD1))).